We begin with the raw amino-acid sequence, 616 residues long: Chaperone protein HtpG (616 aa).

An a; substrate-binding region spans residues 1–333 (MKKQFDTEVN…CQDLPLNVSR (333 aa)). Residues 334–542 (EILQQNKILS…SNDPTYQMQK (209 aa)) form a b region. Residues 543 to 616 (IMLSMGQEVK…INEFIEKDFL (74 aa)) are c.

It belongs to the heat shock protein 90 family. Homodimer.

The protein resides in the cytoplasm. Molecular chaperone. Has ATPase activity. The protein is Chaperone protein HtpG of Borreliella burgdorferi (strain ATCC 35210 / DSM 4680 / CIP 102532 / B31) (Borrelia burgdorferi).